Reading from the N-terminus, the 314-residue chain is GMP synthase [glutamine-hydrolyzing] subunit B (314 aa).

The GMPS ATP-PPase domain occupies 2 to 186; the sequence is FDPKKFVEEA…LGIPDEIVER (185 aa). 29 to 35 is a binding site for ATP; the sequence is SGGVDST.

Heterodimer composed of a glutamine amidotransferase subunit (A) and a GMP-binding subunit (B).

It carries out the reaction XMP + L-glutamine + ATP + H2O = GMP + L-glutamate + AMP + diphosphate + 2 H(+). The protein operates within purine metabolism; GMP biosynthesis; GMP from XMP (L-Gln route): step 1/1. In terms of biological role, catalyzes the synthesis of GMP from XMP. This is GMP synthase [glutamine-hydrolyzing] subunit B (guaAB) from Methanopyrus kandleri (strain AV19 / DSM 6324 / JCM 9639 / NBRC 100938).